A 286-amino-acid chain; its full sequence is 4-hydroxy-3-methylbut-2-enyl diphosphate reductase (286 aa).

C12 is a [4Fe-4S] cluster binding site. Positions 47 and 80 each coordinate (2E)-4-hydroxy-3-methylbut-2-enyl diphosphate. Dimethylallyl diphosphate-binding residues include H47 and H80. The isopentenyl diphosphate site is built by H47 and H80. C102 lines the [4Fe-4S] cluster pocket. H130 lines the (2E)-4-hydroxy-3-methylbut-2-enyl diphosphate pocket. H130 serves as a coordination point for dimethylallyl diphosphate. H130 lines the isopentenyl diphosphate pocket. Catalysis depends on E132, which acts as the Proton donor. Position 170 (T170) interacts with (2E)-4-hydroxy-3-methylbut-2-enyl diphosphate. Residue C198 coordinates [4Fe-4S] cluster. (2E)-4-hydroxy-3-methylbut-2-enyl diphosphate is bound by residues S226, N228, and S270. Dimethylallyl diphosphate-binding residues include S226, N228, and S270. Positions 226, 228, and 270 each coordinate isopentenyl diphosphate.

Belongs to the IspH family. The cofactor is [4Fe-4S] cluster.

The catalysed reaction is isopentenyl diphosphate + 2 oxidized [2Fe-2S]-[ferredoxin] + H2O = (2E)-4-hydroxy-3-methylbut-2-enyl diphosphate + 2 reduced [2Fe-2S]-[ferredoxin] + 2 H(+). The enzyme catalyses dimethylallyl diphosphate + 2 oxidized [2Fe-2S]-[ferredoxin] + H2O = (2E)-4-hydroxy-3-methylbut-2-enyl diphosphate + 2 reduced [2Fe-2S]-[ferredoxin] + 2 H(+). Its pathway is isoprenoid biosynthesis; dimethylallyl diphosphate biosynthesis; dimethylallyl diphosphate from (2E)-4-hydroxy-3-methylbutenyl diphosphate: step 1/1. It participates in isoprenoid biosynthesis; isopentenyl diphosphate biosynthesis via DXP pathway; isopentenyl diphosphate from 1-deoxy-D-xylulose 5-phosphate: step 6/6. Its function is as follows. Catalyzes the conversion of 1-hydroxy-2-methyl-2-(E)-butenyl 4-diphosphate (HMBPP) into a mixture of isopentenyl diphosphate (IPP) and dimethylallyl diphosphate (DMAPP). Acts in the terminal step of the DOXP/MEP pathway for isoprenoid precursor biosynthesis. The polypeptide is 4-hydroxy-3-methylbut-2-enyl diphosphate reductase (Desulfovibrio desulfuricans (strain ATCC 27774 / DSM 6949 / MB)).